Consider the following 29-residue polypeptide: Glucagon (29 aa).

This sequence belongs to the glucagon family.

The protein resides in the secreted. Glucagon plays a key role in glucose metabolism and homeostasis. Regulates blood glucose by increasing gluconeogenesis and decreasing glycolysis. The polypeptide is Glucagon (gcg) (Lampetra fluviatilis (European river lamprey)).